Reading from the N-terminus, the 471-residue chain is MANSFATRTFTTLSDLQPNMANLKVIGVVIGKTDVKGFPDRKNIGSERYTFSFTIRDSPAHFVNAASWGNEDYIKSLSDSFRVGDCVIIENPLIQRKEIEREEKFSPATPSNCKLLLSENHSTVKVCSSYEVDTKLLSLIHLPVKESHDYYSLGDIVANGHSLNGRIINVLAAVKSVGEPKYFTTSDRRKGQRCEVRLYDETEFSFAMTCWDNESILLAQSWMPRETVIFVSDVRISFDKFRNCMTATVISKTIITTNPETPEANILLNFIRENKETNVLDDEIESYFKESINLSTIVDVYTVEQLKGKALKNEGKADPSYGILYAYISTLNIDDETTKVVRNRCSTCGYIVNEASNMCTICNKNSLDFKSVFLSFDMLIDLTDHTGTLHSCSLTGSVAEETLGCTVNEFLAMTDEQKTALKWQFLLERSKIYLKFVVSHRARSGLKISVLSCKLADPTEASRNLSGQTRV.

Residues 167 to 272 (IINVLAAVKS…EANILLNFIR (106 aa)) constitute a DNA-binding region (OB).

The protein belongs to the MEIOB family. As to quaternary structure, component of a multiprotein complex with RPA2 and SPATA22. Interacts with SPATA22. Interacts with the complex BRME1:HSF2BP:BRCA2.

It is found in the cytoplasm. The protein resides in the nucleus. The protein localises to the chromosome. Functionally, single-stranded DNA-binding protein required for homologous recombination in meiosis I. Required for double strand breaks (DSBs) repair and crossover formation and promotion of faithful and complete synapsis. Not required for the initial loading of recombinases but required to maintain a proper number of RAD51 and DMC1 foci after the zygotene stage. May act by ensuring the stabilization of recombinases, which is required for successful homology search and meiotic recombination. Displays Single-stranded DNA 3'-5' exonuclease activity in vitro. This chain is Meiosis-specific with OB domain-containing protein (MEIOB), found in Macaca fascicularis (Crab-eating macaque).